Reading from the N-terminus, the 79-residue chain is Neurotoxin BmK-M9 (79 aa).

The N-terminal stretch at 1–14 (MISFALLLMTGVES) is a signal peptide. Residues 16–78 (RDAYIAKPEN…VPIRVPGKCH (63 aa)) form the LCN-type CS-alpha/beta domain. Disulfide bonds link Cys-26/Cys-77, Cys-30/Cys-50, Cys-36/Cys-60, and Cys-40/Cys-62. Position 79 (Arg-79) is a propeptide, removed by a carboxypeptidase.

It belongs to the long (4 C-C) scorpion toxin superfamily. Sodium channel inhibitor family. Alpha subfamily. Expressed by the venom gland.

The protein resides in the secreted. Binds to sodium channels (Nav) and inhibits the inactivation of the activated channels, thereby blocking neuronal transmission. This toxin is active against mammals. The sequence is that of Neurotoxin BmK-M9 from Olivierus martensii (Manchurian scorpion).